A 491-amino-acid chain; its full sequence is AAA-ATPase At2g46620 (491 aa).

A helical membrane pass occupies residues 1–21 (MGILWDSFLLLLVSTFALFLV). 238 to 245 (GPSGTGKS) is a binding site for ATP. The disordered stretch occupies residues 423-460 (GTGRRLLLENGSRKSTSEDVSDDMSGSLCGGGGGSSPA).

This sequence belongs to the AAA ATPase family. BCS1 subfamily. Requires Mg(2+) as cofactor.

The protein localises to the membrane. The catalysed reaction is ATP + H2O = ADP + phosphate + H(+). This is AAA-ATPase At2g46620 from Arabidopsis thaliana (Mouse-ear cress).